A 79-amino-acid polypeptide reads, in one-letter code: Metallothionein-like protein type 2 (79 aa).

This sequence belongs to the metallothionein superfamily. Type 15 family.

Functionally, metallothioneins have a high content of cysteine residues that bind various heavy metals. The polypeptide is Metallothionein-like protein type 2 (MT1) (Malus domestica (Apple)).